Here is a 488-residue protein sequence, read N- to C-terminus: Monodehydroascorbate reductase 4, peroxisomal (488 aa).

The Cytoplasmic segment spans residues 1–3; sequence MGR. The chain crosses the membrane as a helical span at residues 4–24; sequence AFVYVILGGGVAAGYAALEFT. FAD is bound by residues 12-15, E39, R46, K51, and 145-146; these read GGVA and RD. Residues 25–458 are Peroxisomal-facing; it reads RRGVSDGELC…SASVVMIKKP (434 aa). Residues 170 to 176, E194, R200, and G259 each bind NAD(+); that span reads GGYIGME. Position 172–176 (172–176) interacts with NADP(+); that stretch reads YIGME. Positions 200 and 259 each coordinate NADP(+). Residue D296 coordinates FAD. Residue 312–313 coordinates NAD(+); that stretch reads EH. An NADP(+)-binding site is contributed by 312 to 313; sequence EH. V314 is a binding site for FAD. L-ascorbate is bound at residue R318. An FAD-binding site is contributed by Y344. Y344 is a binding site for NAD(+). Position 344 (Y344) interacts with NADP(+). An L-ascorbate-binding site is contributed by R346. A helical membrane pass occupies residues 459–479; that stretch reads LYVWHAATGVVVAASVAAFAF. The Cytoplasmic segment spans residues 480-488; it reads WYGRRRRRW.

Belongs to the FAD-dependent oxidoreductase family. FAD serves as cofactor.

Its subcellular location is the peroxisome membrane. It carries out the reaction 2 monodehydro-L-ascorbate radical + NADH + H(+) = 2 L-ascorbate + NAD(+). Its function is as follows. Catalyzes the conversion of monodehydroascorbate to ascorbate, oxidizing NADH in the process. Involved in the detoxification of H(2)O(2) that escapes the peroxisome and causes oxidative damage to oil bodies. This is Monodehydroascorbate reductase 4, peroxisomal from Arabidopsis thaliana (Mouse-ear cress).